The sequence spans 290 residues: uncharacterized protein (290 aa).

This is an uncharacterized protein from Psittacid herpesvirus 1 (isolate Amazon parrot/-/97-0001/1997) (PsHV-1).